We begin with the raw amino-acid sequence, 308 residues long: N-acetylmuramic acid 6-phosphate etherase (308 aa).

One can recognise an SIS domain in the interval Ile-63–Lys-226. The active-site Proton donor is Glu-91. Residue Glu-122 is part of the active site.

Belongs to the GCKR-like family. MurNAc-6-P etherase subfamily. As to quaternary structure, homodimer.

It catalyses the reaction N-acetyl-D-muramate 6-phosphate + H2O = N-acetyl-D-glucosamine 6-phosphate + (R)-lactate. The protein operates within amino-sugar metabolism; 1,6-anhydro-N-acetylmuramate degradation. Its pathway is amino-sugar metabolism; N-acetylmuramate degradation. It functions in the pathway cell wall biogenesis; peptidoglycan recycling. In terms of biological role, specifically catalyzes the cleavage of the D-lactyl ether substituent of MurNAc 6-phosphate, producing GlcNAc 6-phosphate and D-lactate. Together with AnmK, is also required for the utilization of anhydro-N-acetylmuramic acid (anhMurNAc) either imported from the medium or derived from its own cell wall murein, and thus plays a role in cell wall recycling. This chain is N-acetylmuramic acid 6-phosphate etherase, found in Colwellia psychrerythraea (strain 34H / ATCC BAA-681) (Vibrio psychroerythus).